Consider the following 310-residue polypeptide: p-hydroxybenzoic acid efflux pump subunit AaeA (310 aa).

The helical transmembrane segment at 12–32 (AITVVLVILAFIAIFNAWVYY) threads the bilayer.

This sequence belongs to the membrane fusion protein (MFP) (TC 8.A.1) family.

It localises to the cell inner membrane. Functionally, forms an efflux pump with AaeB. The protein is p-hydroxybenzoic acid efflux pump subunit AaeA of Escherichia coli O9:H4 (strain HS).